The sequence spans 239 residues: Large ribosomal subunit protein uL1 (239 aa).

It belongs to the universal ribosomal protein uL1 family. Part of the 50S ribosomal subunit.

In terms of biological role, binds directly to 23S rRNA. The L1 stalk is quite mobile in the ribosome, and is involved in E site tRNA release. Functionally, protein L1 is also a translational repressor protein, it controls the translation of the L11 operon by binding to its mRNA. The chain is Large ribosomal subunit protein uL1 from Rickettsia akari (strain Hartford).